Consider the following 421-residue polypeptide: Phosphoribosylamine--glycine ligase (421 aa).

The ATP-grasp domain occupies Lys-108–Met-314. Ile-134–Ser-195 is an ATP binding site. Positions 284 and 286 each coordinate Mg(2+).

This sequence belongs to the GARS family. Requires Mg(2+) as cofactor. It depends on Mn(2+) as a cofactor.

The enzyme catalyses 5-phospho-beta-D-ribosylamine + glycine + ATP = N(1)-(5-phospho-beta-D-ribosyl)glycinamide + ADP + phosphate + H(+). The protein operates within purine metabolism; IMP biosynthesis via de novo pathway; N(1)-(5-phospho-D-ribosyl)glycinamide from 5-phospho-alpha-D-ribose 1-diphosphate: step 2/2. In Streptococcus pyogenes serotype M18 (strain MGAS8232), this protein is Phosphoribosylamine--glycine ligase.